Consider the following 514-residue polypeptide: 2-isopropylmalate synthase (514 aa).

The 263-residue stretch at 5-267 (VIIFDTTLRD…ETNIKHEEIH (263 aa)) folds into the Pyruvate carboxyltransferase domain. Residues Asp-14, His-202, His-204, and Asn-238 each contribute to the Mn(2+) site. Residues 392-514 (KLNYLSVQSG…AEIKERIATV (123 aa)) form a regulatory domain region.

This sequence belongs to the alpha-IPM synthase/homocitrate synthase family. LeuA type 1 subfamily. In terms of assembly, homodimer. Requires Mn(2+) as cofactor.

The protein resides in the cytoplasm. It carries out the reaction 3-methyl-2-oxobutanoate + acetyl-CoA + H2O = (2S)-2-isopropylmalate + CoA + H(+). It functions in the pathway amino-acid biosynthesis; L-leucine biosynthesis; L-leucine from 3-methyl-2-oxobutanoate: step 1/4. Catalyzes the condensation of the acetyl group of acetyl-CoA with 3-methyl-2-oxobutanoate (2-ketoisovalerate) to form 3-carboxy-3-hydroxy-4-methylpentanoate (2-isopropylmalate). The chain is 2-isopropylmalate synthase from Photobacterium profundum (strain SS9).